Consider the following 224-residue polypeptide: Glutathione peroxidase 3 (224 aa).

The N-terminal stretch at 1–18 (MAPGSVLSLAVALATIIG) is a signal peptide. Asparagine 38 carries an N-linked (GlcNAc...) asparagine glycan. The active site involves cysteine 73.

It belongs to the glutathione peroxidase family.

The protein localises to the secreted. The protein resides in the extracellular space. The enzyme catalyses 2 glutathione + H2O2 = glutathione disulfide + 2 H2O. This chain is Glutathione peroxidase 3 (gpx-3), found in Caenorhabditis elegans.